We begin with the raw amino-acid sequence, 274 residues long: NAD(P)H dehydrogenase [quinone] 1 (274 aa).

Ala-2 bears the N-acetylalanine mark. FAD-binding positions include His-12, 18 to 19 (FN), and Gln-67. Position 82 is a phosphoserine (Ser-82). 104-107 (LYWF) contacts FAD. A substrate-binding site is contributed by 126 to 128 (AYT). Residues 148-151 (TTGG), Tyr-156, and Arg-201 each bind FAD. The important for apoenzyme conformational stability stretch occupies residues 225-274 (PSSLFDLNFQAGFLLKKEVQEEQKKNKFGLSVGHHLGKSIPADNQIKARK). A Glycyl lysine isopeptide (Lys-Gly) (interchain with G-Cter in SUMO2) cross-link involves residue Lys-251.

The protein belongs to the NAD(P)H dehydrogenase (quinone) family. Homodimer. Interacts with PDLIM4 isoform 2; this interaction stabilizes PDLIM4 isoform 2 in response to oxidative stress and protects it from ubiquitin-independent degradation by the core 20S proteasome. Interacts with TP73 (via SAM domain); this interaction is NADH-dependent, stabilizes TP73 in response to oxidative stress and protects it from ubiquitin-independent degradation by the 20S proteasome. Interacts with TP53; this interaction is NADH-dependent, stabilizes TP53 in response to oxidative stress and protects it from ubiquitin-independent degradation by the 20S proteasome. FAD serves as cofactor.

Its subcellular location is the cytoplasm. The protein resides in the cytosol. The catalysed reaction is a quinone + NADH + H(+) = a quinol + NAD(+). It catalyses the reaction a quinone + NADPH + H(+) = a quinol + NADP(+). The enzyme catalyses ubiquinone-10 + NADH + H(+) = ubiquinol-10 + NAD(+). It carries out the reaction menadione + NADH + H(+) = menadiol + NAD(+). Functionally, flavin-containing quinone reductase that catalyzes two-electron reduction of quinones to hydroquinones using either NADH or NADPH as electron donors. In a ping-pong kinetic mechanism, the electrons are sequentially transferred from NAD(P)H to flavin cofactor and then from reduced flavin to the quinone, bypassing the formation of semiquinone and reactive oxygen species. Regulates cellular redox state primarily through quinone detoxification. Reduces components of plasma membrane redox system such as coenzyme Q and vitamin quinones, producing antioxidant hydroquinone forms. In the process may function as superoxide scavenger to prevent hydroquinone oxidation and facilitate excretion. Alternatively, can activate quinones and their derivatives by generating redox reactive hydroquinones with DNA cross-linking antitumor potential. Acts as a gatekeeper of the core 20S proteasome known to degrade proteins with unstructured regions. Upon oxidative stress, interacts with tumor suppressors TP53 and TP73 in a NADH-dependent way and inhibits their ubiquitin-independent degradation by the 20S proteasome. The polypeptide is NAD(P)H dehydrogenase [quinone] 1 (Nqo1) (Rattus norvegicus (Rat)).